The chain runs to 577 residues: Arginine--tRNA ligase (577 aa).

The short motif at 122–132 (PNVAKEMHVGH) is the 'HIGH' region element.

Belongs to the class-I aminoacyl-tRNA synthetase family. In terms of assembly, monomer.

Its subcellular location is the cytoplasm. The catalysed reaction is tRNA(Arg) + L-arginine + ATP = L-arginyl-tRNA(Arg) + AMP + diphosphate. The chain is Arginine--tRNA ligase from Salmonella enteritidis PT4 (strain P125109).